A 644-amino-acid chain; its full sequence is 1,4-alpha-glucan branching enzyme GlgB (644 aa).

D309 (nucleophile) is an active-site residue. The active-site Proton donor is E362.

Belongs to the glycosyl hydrolase 13 family. GlgB subfamily. Monomer.

It carries out the reaction Transfers a segment of a (1-&gt;4)-alpha-D-glucan chain to a primary hydroxy group in a similar glucan chain.. Its pathway is glycan biosynthesis; glycogen biosynthesis. Catalyzes the formation of the alpha-1,6-glucosidic linkages in glycogen by scission of a 1,4-alpha-linked oligosaccharide from growing alpha-1,4-glucan chains and the subsequent attachment of the oligosaccharide to the alpha-1,6 position. The sequence is that of 1,4-alpha-glucan branching enzyme GlgB from Cutibacterium acnes (strain DSM 16379 / KPA171202) (Propionibacterium acnes).